Here is a 170-residue protein sequence, read N- to C-terminus: MAQTDRRATGDGLLEKLVGVRRVAKVVKGGRQFGFSALTVVGDGKGRVGFGRGKAREVPVAIQKAMENARKNMISVPLEGDTLQHPITARHGAAKVHMQPASEGTGIIAGGAMRAVFEVVGVHNVLAKCIGSANPVNVVQATVKGLVQMSSPEAIAAKRGKNLEEIVGGG.

The S5 DRBM domain occupies 13–76; sequence LLEKLVGVRR…ENARKNMISV (64 aa).

This sequence belongs to the universal ribosomal protein uS5 family. Part of the 30S ribosomal subunit. Contacts proteins S4 and S8.

Its function is as follows. With S4 and S12 plays an important role in translational accuracy. In terms of biological role, located at the back of the 30S subunit body where it stabilizes the conformation of the head with respect to the body. The sequence is that of Small ribosomal subunit protein uS5 from Nitrosococcus oceani (strain ATCC 19707 / BCRC 17464 / JCM 30415 / NCIMB 11848 / C-107).